Consider the following 81-residue polypeptide: Translational regulator CsrA (81 aa).

This sequence belongs to the CsrA/RsmA family. In terms of assembly, homodimer; the beta-strands of each monomer intercalate to form a hydrophobic core, while the alpha-helices form wings that extend away from the core.

Its subcellular location is the cytoplasm. A translational regulator that binds mRNA to regulate translation initiation and/or mRNA stability. Usually binds in the 5'-UTR at or near the Shine-Dalgarno sequence preventing ribosome-binding, thus repressing translation. Its main target seems to be the major flagellin gene, while its function is anatagonized by FliW. This Borreliella burgdorferi (strain ATCC 35210 / DSM 4680 / CIP 102532 / B31) (Borrelia burgdorferi) protein is Translational regulator CsrA.